The chain runs to 177 residues: ATP synthase subunit delta (177 aa).

Belongs to the ATPase delta chain family. In terms of assembly, F-type ATPases have 2 components, F(1) - the catalytic core - and F(0) - the membrane proton channel. F(1) has five subunits: alpha(3), beta(3), gamma(1), delta(1), epsilon(1). F(0) has three main subunits: a(1), b(2) and c(10-14). The alpha and beta chains form an alternating ring which encloses part of the gamma chain. F(1) is attached to F(0) by a central stalk formed by the gamma and epsilon chains, while a peripheral stalk is formed by the delta and b chains.

The protein localises to the cell membrane. Its function is as follows. F(1)F(0) ATP synthase produces ATP from ADP in the presence of a proton or sodium gradient. F-type ATPases consist of two structural domains, F(1) containing the extramembraneous catalytic core and F(0) containing the membrane proton channel, linked together by a central stalk and a peripheral stalk. During catalysis, ATP synthesis in the catalytic domain of F(1) is coupled via a rotary mechanism of the central stalk subunits to proton translocation. In terms of biological role, this protein is part of the stalk that links CF(0) to CF(1). It either transmits conformational changes from CF(0) to CF(1) or is implicated in proton conduction. This is ATP synthase subunit delta from Exiguobacterium sp. (strain ATCC BAA-1283 / AT1b).